A 425-amino-acid chain; its full sequence is 3-phosphoshikimate 1-carboxyvinyltransferase (425 aa).

The 3-phosphoshikimate site is built by lysine 22, serine 23, and arginine 27. Lysine 22 serves as a coordination point for phosphoenolpyruvate. Residues glycine 95 and arginine 123 each contribute to the phosphoenolpyruvate site. 7 residues coordinate 3-phosphoshikimate: serine 169, serine 170, glutamine 171, serine 197, aspartate 313, asparagine 336, and lysine 340. Position 171 (glutamine 171) interacts with phosphoenolpyruvate. Residue aspartate 313 is the Proton acceptor of the active site. 3 residues coordinate phosphoenolpyruvate: arginine 344, arginine 386, and lysine 411.

Belongs to the EPSP synthase family. In terms of assembly, monomer.

The protein localises to the cytoplasm. It carries out the reaction 3-phosphoshikimate + phosphoenolpyruvate = 5-O-(1-carboxyvinyl)-3-phosphoshikimate + phosphate. The protein operates within metabolic intermediate biosynthesis; chorismate biosynthesis; chorismate from D-erythrose 4-phosphate and phosphoenolpyruvate: step 6/7. Functionally, catalyzes the transfer of the enolpyruvyl moiety of phosphoenolpyruvate (PEP) to the 5-hydroxyl of shikimate-3-phosphate (S3P) to produce enolpyruvyl shikimate-3-phosphate and inorganic phosphate. The polypeptide is 3-phosphoshikimate 1-carboxyvinyltransferase (Pseudoalteromonas translucida (strain TAC 125)).